Reading from the N-terminus, the 376-residue chain is E3 ubiquitin-protein ligase RNF133 (376 aa).

Positions 65–167 (SSTLKRVAGV…LKGTEIFHLI (103 aa)) constitute a PA domain. A helical transmembrane segment spans residues 190–210 (YLVSFVIVTTATLAYFIFYHI). Residues 256 to 297 (CVICFERYKPNDIVRILTCKHFFHKNCIDPWILPHGTCPICK) form an RING-type; atypical zinc finger. The tract at residues 327-376 (ETLSPSEEETNNEVSPAGTSDKVIHVEENPTSQNNDIQPHSVVEDVHPSP) is disordered. Over residues 355–364 (NPTSQNNDIQ) the composition is skewed to polar residues.

Interacts with E3 ligase UBE2J1. Post-translationally, auto-ubiquitinated. As to expression, expression is testis-specific.

The protein localises to the endoplasmic reticulum membrane. The catalysed reaction is S-ubiquitinyl-[E2 ubiquitin-conjugating enzyme]-L-cysteine + [acceptor protein]-L-lysine = [E2 ubiquitin-conjugating enzyme]-L-cysteine + N(6)-ubiquitinyl-[acceptor protein]-L-lysine.. It participates in protein modification; protein ubiquitination. In terms of biological role, has E3 ubiquitin-protein ligase activity. Plays a role in male fecundity through the interaction with the E2 ubituitin-protein ligase UBE2J1. The protein is E3 ubiquitin-protein ligase RNF133 of Homo sapiens (Human).